The primary structure comprises 398 residues: Phosphoglycerate kinase (398 aa).

Substrate contacts are provided by residues 21–23, R36, 59–62, R119, and R157; these read DFN and HLGR. Residues K208, G296, E327, and 354-357 each bind ATP; that span reads GGDS.

Belongs to the phosphoglycerate kinase family. In terms of assembly, monomer.

It localises to the cytoplasm. The catalysed reaction is (2R)-3-phosphoglycerate + ATP = (2R)-3-phospho-glyceroyl phosphate + ADP. It functions in the pathway carbohydrate degradation; glycolysis; pyruvate from D-glyceraldehyde 3-phosphate: step 2/5. This Streptococcus pneumoniae serotype 2 (strain D39 / NCTC 7466) protein is Phosphoglycerate kinase.